The sequence spans 279 residues: Pantothenate synthetase (279 aa).

26–33 (MGALHSGH) is an ATP binding site. Catalysis depends on His-33, which acts as the Proton donor. A (R)-pantoate-binding site is contributed by Gln-57. A beta-alanine-binding site is contributed by Gln-57. 147–150 (GQKD) contacts ATP. Position 153 (Gln-153) interacts with (R)-pantoate. ATP contacts are provided by residues Ile-176 and 184 to 187 (ESSR).

Belongs to the pantothenate synthetase family. Homodimer.

It localises to the cytoplasm. It carries out the reaction (R)-pantoate + beta-alanine + ATP = (R)-pantothenate + AMP + diphosphate + H(+). It participates in cofactor biosynthesis; (R)-pantothenate biosynthesis; (R)-pantothenate from (R)-pantoate and beta-alanine: step 1/1. Catalyzes the condensation of pantoate with beta-alanine in an ATP-dependent reaction via a pantoyl-adenylate intermediate. In Corynebacterium glutamicum (strain R), this protein is Pantothenate synthetase.